A 180-amino-acid chain; its full sequence is Adenine phosphoribosyltransferase (180 aa).

This sequence belongs to the purine/pyrimidine phosphoribosyltransferase family. In terms of assembly, homodimer.

Its subcellular location is the cytoplasm. It catalyses the reaction AMP + diphosphate = 5-phospho-alpha-D-ribose 1-diphosphate + adenine. Its pathway is purine metabolism; AMP biosynthesis via salvage pathway; AMP from adenine: step 1/1. Its function is as follows. Catalyzes a salvage reaction resulting in the formation of AMP, that is energically less costly than de novo synthesis. This is Adenine phosphoribosyltransferase from Butyrivibrio fibrisolvens.